Reading from the N-terminus, the 477-residue chain is MELYDLTIHELRDLLRKEEVSPEEVLDSFYKRIDEVEDKVKAYVTLTRDEARNSLASLKDGRLAGIPLAIKDNISTRGIKTTCSSKILNNYKPPYDATVVKRLKEEGGITLGKTNMDEFAMGSSTENSGFYPTHNPWNLDHAPGGSSGGSAAAVAAGEAPGALGSDTGGSIRQPAAFCGVVGLKPTYGCVSRYGLVAFASSLDQIGPITKDVTDSALLLNVISGHDPMDSTSVDREKEDYTTYLKDDVKGMKIGLPEEYFSLDFNSEVKDKVMSAVKELEKAGAIVEEVSLPNIEYALAAYYIIAPAEASSNLARYDGVRYGYRSENGDSVRSMFTNTRSEGFGDEVKRRIMLGTYVLSSGYYDAFYLKAQKVRTLIKEDFERVFKDYDVLISPTTPTTAFKLGEMTDPLEMYQSDVFTVPVNIAGIPAISVPCGFDSNNLPIGLQIMGPHFGEGKILQTAYTLEQALNMKTKRPKL.

Active-site charge relay system residues include K71 and S146. S170 acts as the Acyl-ester intermediate in catalysis.

It belongs to the amidase family. GatA subfamily. Heterotrimer of A, B and C subunits.

It catalyses the reaction L-glutamyl-tRNA(Gln) + L-glutamine + ATP + H2O = L-glutaminyl-tRNA(Gln) + L-glutamate + ADP + phosphate + H(+). In terms of biological role, allows the formation of correctly charged Gln-tRNA(Gln) through the transamidation of misacylated Glu-tRNA(Gln) in organisms which lack glutaminyl-tRNA synthetase. The reaction takes place in the presence of glutamine and ATP through an activated gamma-phospho-Glu-tRNA(Gln). The polypeptide is Glutamyl-tRNA(Gln) amidotransferase subunit A (Halothermothrix orenii (strain H 168 / OCM 544 / DSM 9562)).